The following is a 353-amino-acid chain: Glutamate 5-kinase (353 aa).

Residue lysine 8 coordinates ATP. Residues serine 47, aspartate 134, and asparagine 146 each coordinate substrate. 198–204 (TGGIRSK) serves as a coordination point for ATP. A PUA domain is found at 262 to 339 (AGKIYVNKGA…SDLKKILGYE (78 aa)).

This sequence belongs to the glutamate 5-kinase family.

The protein resides in the cytoplasm. The enzyme catalyses L-glutamate + ATP = L-glutamyl 5-phosphate + ADP. Its pathway is amino-acid biosynthesis; L-proline biosynthesis; L-glutamate 5-semialdehyde from L-glutamate: step 1/2. Catalyzes the transfer of a phosphate group to glutamate to form L-glutamate 5-phosphate. This is Glutamate 5-kinase from Thermotoga maritima (strain ATCC 43589 / DSM 3109 / JCM 10099 / NBRC 100826 / MSB8).